The following is a 232-amino-acid chain: Orotidine 5'-phosphate decarboxylase (232 aa).

Substrate-binding positions include aspartate 11, lysine 33, 60-69 (DLKLYDIPNT), threonine 119, arginine 180, glutamine 189, glycine 209, and arginine 210. The active-site Proton donor is lysine 62.

It belongs to the OMP decarboxylase family. Type 1 subfamily. Homodimer.

It carries out the reaction orotidine 5'-phosphate + H(+) = UMP + CO2. It functions in the pathway pyrimidine metabolism; UMP biosynthesis via de novo pathway; UMP from orotate: step 2/2. Catalyzes the decarboxylation of orotidine 5'-monophosphate (OMP) to uridine 5'-monophosphate (UMP). This chain is Orotidine 5'-phosphate decarboxylase, found in Wigglesworthia glossinidia brevipalpis.